Here is a 481-residue protein sequence, read N- to C-terminus: Aromatic amino acid aminotransferase DDB_G0272014 (481 aa).

Lys300 carries the post-translational modification N6-(pyridoxal phosphate)lysine.

This sequence belongs to the class-I pyridoxal-phosphate-dependent aminotransferase family. Pyridoxal 5'-phosphate is required as a cofactor.

The protein resides in the cytoplasm. It carries out the reaction an aromatic L-alpha-amino acid + 2-oxoglutarate = an aromatic oxo-acid + L-glutamate. Functionally, has aromatic amino acid transaminase activity. The polypeptide is Aromatic amino acid aminotransferase DDB_G0272014 (Dictyostelium discoideum (Social amoeba)).